The following is a 156-amino-acid chain: Aspartate carbamoyltransferase regulatory chain (156 aa).

Positions 109, 114, 138, and 141 each coordinate Zn(2+).

This sequence belongs to the PyrI family. In terms of assembly, contains catalytic and regulatory chains. Zn(2+) is required as a cofactor.

In terms of biological role, involved in allosteric regulation of aspartate carbamoyltransferase. The polypeptide is Aspartate carbamoyltransferase regulatory chain (Baumannia cicadellinicola subsp. Homalodisca coagulata).